Here is a 404-residue protein sequence, read N- to C-terminus: Acetate kinase (404 aa).

N7 lines the Mg(2+) pocket. K14 provides a ligand contact to ATP. A substrate-binding site is contributed by R91. The active-site Proton donor/acceptor is D148. ATP-binding positions include 208-212 and 283-285; these read HLGNG and DLR. Mg(2+) is bound at residue E388.

The protein belongs to the acetokinase family. In terms of assembly, homodimer. Requires Mg(2+) as cofactor. It depends on Mn(2+) as a cofactor.

It localises to the cytoplasm. The catalysed reaction is acetate + ATP = acetyl phosphate + ADP. The protein operates within metabolic intermediate biosynthesis; acetyl-CoA biosynthesis; acetyl-CoA from acetate: step 1/2. Functionally, catalyzes the formation of acetyl phosphate from acetate and ATP. Can also catalyze the reverse reaction. This chain is Acetate kinase, found in Borrelia turicatae (strain 91E135).